We begin with the raw amino-acid sequence, 288 residues long: Thymidylate synthase (288 aa).

A dUMP-binding site is contributed by arginine 21. Histidine 51 is a binding site for (6R)-5,10-methylene-5,6,7,8-tetrahydrofolate. 150 to 151 serves as a coordination point for dUMP; sequence RR. Cysteine 170 (nucleophile) is an active-site residue. Residues 190-193, asparagine 201, and 231-233 contribute to the dUMP site; these read RSGD and HIY. Aspartate 193 lines the (6R)-5,10-methylene-5,6,7,8-tetrahydrofolate pocket. Position 287 (alanine 287) interacts with (6R)-5,10-methylene-5,6,7,8-tetrahydrofolate.

It belongs to the thymidylate synthase family. Bacterial-type ThyA subfamily. Homodimer.

It is found in the cytoplasm. It carries out the reaction dUMP + (6R)-5,10-methylene-5,6,7,8-tetrahydrofolate = 7,8-dihydrofolate + dTMP. The protein operates within pyrimidine metabolism; dTTP biosynthesis. Its function is as follows. Catalyzes the reductive methylation of 2'-deoxyuridine-5'-monophosphate (dUMP) to 2'-deoxythymidine-5'-monophosphate (dTMP) while utilizing 5,10-methylenetetrahydrofolate (mTHF) as the methyl donor and reductant in the reaction, yielding dihydrofolate (DHF) as a by-product. This enzymatic reaction provides an intracellular de novo source of dTMP, an essential precursor for DNA biosynthesis. This is Thymidylate synthase from Mycoplasma mobile (strain ATCC 43663 / 163K / NCTC 11711) (Mesomycoplasma mobile).